The primary structure comprises 441 residues: Xylose isomerase (441 aa).

Catalysis depends on residues His-100 and Asp-103. Mg(2+) is bound by residues Glu-231, Glu-267, His-270, Asp-295, Asp-306, Asp-308, and Asp-338.

The protein belongs to the xylose isomerase family. Homotetramer. Mg(2+) is required as a cofactor.

It is found in the cytoplasm. It carries out the reaction alpha-D-xylose = alpha-D-xylulofuranose. The chain is Xylose isomerase from Paraburkholderia phymatum (strain DSM 17167 / CIP 108236 / LMG 21445 / STM815) (Burkholderia phymatum).